The primary structure comprises 152 residues: Ninjurin-1 (152 aa).

An N-acetylmethionine modification is found at Met-1. A compositionally biased stretch (acidic residues) spans 1-10 (MDPGTEEYEL). A disordered region spans residues 1–30 (MDPGTEEYELNGDLRPGSPGSPDASPPRWG). Over 1–78 (MDPGTEEYEL…EQGNEFAFFV (78 aa)) the chain is Extracellular. Residues 16–27 (PGSPGSPDASPP) are compositionally biased toward low complexity. Phosphoserine is present on residues Ser-18, Ser-21, and Ser-25. The interval 26–37 (PPRWGLRNRPIN) is N-terminal adhesion motif. The tract at residues 40–69 (HYANKKSAAESMLDIALLMANASQLKAVVE) is required to induce plasma membrane rupture. The tract at residues 44 to 55 (KKSAAESMLDIA) is helix alpha1. The tract at residues 58–74 (MANASQLKAVVEQGNEF) is helix alpha2. A glycan (N-linked (GlcNAc...) asparagine) is linked at Asn-60. A helical transmembrane segment spans residues 79–103 (PLVVLISISLVLQIGVGVLLIFLVK). The Cytoplasmic segment spans residues 104-113 (YDLNNPAKHA). Residues 114 to 138 (KLDFLNNLATGLVFIIVVVNIFITA) form a helical membrane-spanning segment. Residues 139 to 152 (FGVQKPVMDVAPRQ) are Extracellular-facing.

The protein belongs to the ninjurin family. As to quaternary structure, homodimer; in absence of death stimuli, forms an inactive homodimer. Homooligomer; in response to death stimuli, homooligomerizes into long, highly branched filaments and large, ring-shaped structures in the membrane. The topology shown in the entry corresponds to the activated form. In terms of processing, cleaved by MMP9 protease to generate the Secreted ninjurin-1 form. N-linked glycosylation is required for homooligomerization.

It is found in the cell membrane. Its subcellular location is the synaptic cell membrane. The protein resides in the secreted. Its activity is regulated as follows. In response to death stimuli, homooligomerizes and disrupts membrane integrity by introducing the hydrophilic faces of alpha1 and alpha2 helices into the hydrophobic membrane. Homooligomerization and ability to mediate plasma membrane rupture is inhibited by glycine; it is unclear whether glycine directly or indirectly inhibits homooligomerization. In normal conditions, NINJ1 is autoinhibited via formation of a homodimer: in the inactive homodimer, the alpha1 and alpha2 helices (residues 44-74) form a single transmembrane region without a kink, in which hydrophilic faces of alpha1 and alpha2 helices are sequestered. Effector of various programmed cell death, such as pyroptosis and necroptosis, which mediates plasma membrane rupture (cytolysis). Oligomerizes in response to death stimuli and forms ring-like structures on the plasma membrane: acts by cutting and shedding membrane disks, like a cookie cutter, leading to membrane damage and loss that cannot be repaired by the cell. Plasma membrane rupture leads to release intracellular molecules named damage-associated molecular patterns (DAMPs) that propagate the inflammatory response. Mechanistically, mediates plasma membrane rupture by introducing hydrophilic faces of 2 alpha helices into the hydrophobic membrane. Induces plasma membrane rupture downstream of Gasdermin (GSDMA, GSDMB, GSDMC, GSDMD, or GSDME) or MLKL during pyroptosis or necroptosis, respectively. Acts as an effector of PANoptosis downstream of CASP1, CASP4, CASP8 and RIPK3. Also induces plasma membrane rupture in response to cell swelling caused by osmotic stress and ferroptosis downstream of lipid peroxidation. Acts as a regulator of Toll-like receptor 4 (TLR4) signaling triggered by lipopolysaccharide (LPS) during systemic inflammation; directly binds LPS. Involved in leukocyte migration during inflammation by promoting transendothelial migration of macrophages via homotypic binding. Promotes the migration of monocytes across the brain endothelium to central nervous system inflammatory lesions. Also acts as a homophilic transmembrane adhesion molecule involved in various processes such as axonal growth, cell chemotaxis and angiogenesis. Promotes cell adhesion by mediating homophilic interactions via its extracellular N-terminal adhesion motif (N-NAM). Involved in the progression of the inflammatory stress by promoting cell-to-cell interactions between immune cells and endothelial cells. Plays a role in nerve regeneration by promoting maturation of Schwann cells. Acts as a regulator of angiogenesis. Promotes the formation of new vessels by mediating the interaction between capillary pericyte cells and endothelial cells. Promotes osteoclasts development by enhancing the survival of prefusion osteoclasts. Also involved in striated muscle growth and differentiation. Functionally, secreted form generated by cleavage, which has chemotactic activity. Acts as an anti-inflammatory mediator by promoting monocyte recruitment, thereby ameliorating atherosclerosis. The polypeptide is Ninjurin-1 (Rattus norvegicus (Rat)).